A 211-amino-acid polypeptide reads, in one-letter code: Urease accessory protein UreG (211 aa).

13-20 (GPVGSGKT) contributes to the GTP binding site.

This sequence belongs to the SIMIBI class G3E GTPase family. UreG subfamily. As to quaternary structure, homodimer. UreD, UreF and UreG form a complex that acts as a GTP-hydrolysis-dependent molecular chaperone, activating the urease apoprotein by helping to assemble the nickel containing metallocenter of UreC. The UreE protein probably delivers the nickel.

Its subcellular location is the cytoplasm. Functionally, facilitates the functional incorporation of the urease nickel metallocenter. This process requires GTP hydrolysis, probably effectuated by UreG. This chain is Urease accessory protein UreG, found in Alkalilimnicola ehrlichii (strain ATCC BAA-1101 / DSM 17681 / MLHE-1).